The sequence spans 508 residues: Argininosuccinate lyase (508 aa).

This sequence belongs to the lyase 1 family. Argininosuccinate lyase subfamily.

Its subcellular location is the cytoplasm. It catalyses the reaction 2-(N(omega)-L-arginino)succinate = fumarate + L-arginine. The protein operates within amino-acid biosynthesis; L-arginine biosynthesis; L-arginine from L-ornithine and carbamoyl phosphate: step 3/3. In Methanopyrus kandleri (strain AV19 / DSM 6324 / JCM 9639 / NBRC 100938), this protein is Argininosuccinate lyase.